The primary structure comprises 204 residues: Refilin-A (204 aa).

Positions 1-52 (MVGHLHLQAMGDTREQSRDGLLDSPDSGLPPSPSPSPPFYALSPGTLDTRTT) are disordered. The segment covering 12–21 (DTREQSRDGL) has biased composition (basic and acidic residues). Residues 28–38 (GLPPSPSPSPP) are compositionally biased toward pro residues. Arginine 151 is subject to Asymmetric dimethylarginine.

Belongs to the Refilin family. In terms of assembly, interacts with FLNA and FLNB. In terms of tissue distribution, detected in various tissues, with highest expression in lung, followed by spleen.

The protein resides in the cytoplasm. It is found in the cytoskeleton. Functionally, involved in the regulation of the perinuclear actin network and nuclear shape through interaction with filamins. Plays an essential role in the formation of cartilaginous skeletal elements. This chain is Refilin-A (Rflna), found in Mus musculus (Mouse).